Here is a 138-residue protein sequence, read N- to C-terminus: Small ribosomal subunit protein uS11c (138 aa).

The tract at residues 1–22 (MAKPIPRIGSQRNRRINSRKNA) is disordered. The span at 12 to 22 (RNRRINSRKNA) shows a compositional bias: basic residues.

It belongs to the universal ribosomal protein uS11 family. In terms of assembly, part of the 30S ribosomal subunit.

The protein resides in the plastid. It localises to the chloroplast. The chain is Small ribosomal subunit protein uS11c from Fagopyrum esculentum subsp. ancestrale (Wild buckwheat).